Reading from the N-terminus, the 254-residue chain is Type II methyl-directed restriction enzyme DpnI (254 aa).

The protein belongs to the DpnI type II restriction endonuclease family.

The catalysed reaction is Endonucleolytic cleavage of DNA to give specific double-stranded fragments with terminal 5'-phosphates.. Its function is as follows. An M and P subtype restriction enzyme that recognizes the double-stranded, methylated sequence 5'-G(Me)ATC-3' and cleaves after A-2. This Streptococcus pneumoniae serotype 4 (strain ATCC BAA-334 / TIGR4) protein is Type II methyl-directed restriction enzyme DpnI.